The following is a 160-amino-acid chain: Cytochrome b6-f complex subunit 4 (160 aa).

3 helical membrane passes run Leu-36–Val-56, Leu-95–Glu-115, and Ala-131–Ile-151.

This sequence belongs to the cytochrome b family. PetD subfamily. The 4 large subunits of the cytochrome b6-f complex are cytochrome b6, subunit IV (17 kDa polypeptide, PetD), cytochrome f and the Rieske protein, while the 4 small subunits are PetG, PetL, PetM and PetN. The complex functions as a dimer.

Its subcellular location is the cellular thylakoid membrane. Its function is as follows. Component of the cytochrome b6-f complex, which mediates electron transfer between photosystem II (PSII) and photosystem I (PSI), cyclic electron flow around PSI, and state transitions. The polypeptide is Cytochrome b6-f complex subunit 4 (Crocosphaera subtropica (strain ATCC 51142 / BH68) (Cyanothece sp. (strain ATCC 51142))).